Consider the following 165-residue polypeptide: SsrA-binding protein (165 aa).

Belongs to the SmpB family.

Its subcellular location is the cytoplasm. Functionally, required for rescue of stalled ribosomes mediated by trans-translation. Binds to transfer-messenger RNA (tmRNA), required for stable association of tmRNA with ribosomes. tmRNA and SmpB together mimic tRNA shape, replacing the anticodon stem-loop with SmpB. tmRNA is encoded by the ssrA gene; the 2 termini fold to resemble tRNA(Ala) and it encodes a 'tag peptide', a short internal open reading frame. During trans-translation Ala-aminoacylated tmRNA acts like a tRNA, entering the A-site of stalled ribosomes, displacing the stalled mRNA. The ribosome then switches to translate the ORF on the tmRNA; the nascent peptide is terminated with the 'tag peptide' encoded by the tmRNA and targeted for degradation. The ribosome is freed to recommence translation, which seems to be the essential function of trans-translation. The sequence is that of SsrA-binding protein from Parvibaculum lavamentivorans (strain DS-1 / DSM 13023 / NCIMB 13966).